The following is a 109-amino-acid chain: Large ribosomal subunit protein uL18c (109 aa).

Belongs to the universal ribosomal protein uL18 family. As to quaternary structure, part of the 50S ribosomal subunit; contacts the 5S rRNA.

Its subcellular location is the plastid. It localises to the chloroplast. Binds 5S rRNA, forms part of the central protuberance of the 50S subunit. This chain is Large ribosomal subunit protein uL18c (rpl18), found in Cyanidioschyzon merolae (strain NIES-3377 / 10D) (Unicellular red alga).